We begin with the raw amino-acid sequence, 262 residues long: Ribosome-recycling factor, mitochondrial (262 aa).

The transit peptide at 1–55 (MALGIRCFRLLHPAFSSYLADLSRPVSEVPMKTVRGRQRDHIQYSAHPAVPVRQF) directs the protein to the mitochondrion.

It belongs to the RRF family.

The protein localises to the mitochondrion. In terms of biological role, responsible for the disassembly of ribosomes from messenger RNA at the termination of mitochondrial protein biosynthesis. Acts in collaboration with GFM2. Promotes mitochondrial ribosome recycling by dissolution of intersubunit contacts. The chain is Ribosome-recycling factor, mitochondrial (Mrrf) from Rattus norvegicus (Rat).